The chain runs to 258 residues: MRAKVRAALDALYMKRLVRELEGRPRPQHIGIMLDGNRRWAKMSGIDDPREGYRAGGAKVLDFLRWCDSAQIEHVTLFMLSDDNLARPEEQLNPLIDIIAEVVEQLAAPGNPWPVEAVGALDLLPAESASRLKTATAATQGRKGGTKVDVAVGYGGRREIVDAVRSALTEHSSQGGDIDEFIETFTMEHISKHLYSKTRSESDLIIRTSGEQRLSGFLLWQSAYAEVHFCETYWPDFREIDFLRALRSYSLRERRYGR.

D35 is an active-site residue. Position 35 (D35) interacts with Mg(2+). Substrate contacts are provided by residues 36–39, W40, R50, and 81–83; these read GNRR and SDD. The active-site Proton acceptor is the N84. Residues R87, R207, and 213–215 contribute to the substrate site; that span reads RLS. A Mg(2+)-binding site is contributed by E226.

It belongs to the UPP synthase family. In terms of assembly, homodimer. Mg(2+) is required as a cofactor.

In terms of biological role, catalyzes the condensation of isopentenyl diphosphate (IPP) with allylic pyrophosphates generating different type of terpenoids. This is Isoprenyl transferase 2 from Streptomyces coelicolor (strain ATCC BAA-471 / A3(2) / M145).